The primary structure comprises 211 residues: Protein-methionine-sulfoxide reductase heme-binding subunit MsrQ (211 aa).

5 helical membrane passes run Leu17–Ala37, Leu82–Val102, Pro116–Thr136, Phe153–Ser173, and Ile178–Phe198.

Belongs to the MsrQ family. In terms of assembly, heterodimer of a catalytic subunit (MsrP) and a heme-binding subunit (MsrQ). It depends on FMN as a cofactor. The cofactor is heme b.

It is found in the cell inner membrane. Part of the MsrPQ system that repairs oxidized periplasmic proteins containing methionine sulfoxide residues (Met-O), using respiratory chain electrons. Thus protects these proteins from oxidative-stress damage caused by reactive species of oxygen and chlorine generated by the host defense mechanisms. MsrPQ is essential for the maintenance of envelope integrity under bleach stress, rescuing a wide series of structurally unrelated periplasmic proteins from methionine oxidation, including the primary periplasmic chaperone SurA and the lipoprotein Pal. MsrQ provides electrons for reduction to the reductase catalytic subunit MsrP, using the quinone pool of the respiratory chain. The protein is Protein-methionine-sulfoxide reductase heme-binding subunit MsrQ of Shigella boydii serotype 4 (strain Sb227).